Here is a 412-residue protein sequence, read N- to C-terminus: Tyrosine--tRNA ligase (412 aa).

Tyr-31 provides a ligand contact to L-tyrosine. Positions 36-45 match the 'HIGH' region motif; the sequence is PTAPSLHIGH. L-tyrosine is bound by residues Tyr-162 and Gln-166. A 'KMSKS' region motif is present at residues 222 to 226; that stretch reads KIGKT. Lys-225 contacts ATP. The region spanning 345–411 is the S4 RNA-binding domain; the sequence is KRWLDIVVEL…GKRKKQVIDL (67 aa).

The protein belongs to the class-I aminoacyl-tRNA synthetase family. TyrS type 1 subfamily. In terms of assembly, homodimer.

The protein localises to the cytoplasm. It carries out the reaction tRNA(Tyr) + L-tyrosine + ATP = L-tyrosyl-tRNA(Tyr) + AMP + diphosphate + H(+). Functionally, catalyzes the attachment of tyrosine to tRNA(Tyr) in a two-step reaction: tyrosine is first activated by ATP to form Tyr-AMP and then transferred to the acceptor end of tRNA(Tyr). The chain is Tyrosine--tRNA ligase from Chlamydia trachomatis serovar L2 (strain ATCC VR-902B / DSM 19102 / 434/Bu).